A 405-amino-acid chain; its full sequence is Riboflavin biosynthesis protein RibBA (405 aa).

A DHBP synthase region spans residues 1–205 (MEQIKLDSIA…IKDLIEYRLT (205 aa)). D-ribulose 5-phosphate contacts are provided by residues 30 to 31 (RE), D35, 144 to 148 (RVGHT), and E168. E31 contributes to the Mg(2+) binding site. Position 147 (H147) interacts with Mg(2+). The tract at residues 206 to 405 (HESLVKREIG…KMGHTILKKD (200 aa)) is GTP cyclohydrolase II. 256–260 (RVHSS) is a binding site for GTP. Zn(2+) is bound by residues C261, C272, and C274. GTP-binding positions include Q277, 299 to 301 (EGR), and T321. D333 (proton acceptor; for GTP cyclohydrolase activity) is an active-site residue. The active-site Nucleophile; for GTP cyclohydrolase activity is R335. Residues T356 and K361 each coordinate GTP.

In the N-terminal section; belongs to the DHBP synthase family. It in the C-terminal section; belongs to the GTP cyclohydrolase II family. Mg(2+) serves as cofactor. Mn(2+) is required as a cofactor. It depends on Zn(2+) as a cofactor.

The enzyme catalyses D-ribulose 5-phosphate = (2S)-2-hydroxy-3-oxobutyl phosphate + formate + H(+). The catalysed reaction is GTP + 4 H2O = 2,5-diamino-6-hydroxy-4-(5-phosphoribosylamino)-pyrimidine + formate + 2 phosphate + 3 H(+). Its pathway is cofactor biosynthesis; riboflavin biosynthesis; 2-hydroxy-3-oxobutyl phosphate from D-ribulose 5-phosphate: step 1/1. The protein operates within cofactor biosynthesis; riboflavin biosynthesis; 5-amino-6-(D-ribitylamino)uracil from GTP: step 1/4. In terms of biological role, catalyzes the conversion of D-ribulose 5-phosphate to formate and 3,4-dihydroxy-2-butanone 4-phosphate. Its function is as follows. Catalyzes the conversion of GTP to 2,5-diamino-6-ribosylamino-4(3H)-pyrimidinone 5'-phosphate (DARP), formate and pyrophosphate. The chain is Riboflavin biosynthesis protein RibBA from Cytophaga hutchinsonii (strain ATCC 33406 / DSM 1761 / CIP 103989 / NBRC 15051 / NCIMB 9469 / D465).